The primary structure comprises 497 residues: Serine/threonine-protein phosphatase 2A 56 kDa regulatory subunit beta isoform (497 aa).

The segment covering 1 to 19 (METKLPPASTPTSPSSPGL) has biased composition (low complexity). Disordered stretches follow at residues 1–55 (METK…YQSN) and 475–497 (TQGA…GGQS). A phosphoserine; by CLK2 mark is found at S32, S35, S44, S46, S47, and S48. The span at 34-45 (RSLRRARPRRSH) shows a compositional bias: basic residues.

The protein belongs to the phosphatase 2A regulatory subunit B56 family. In terms of assembly, component of the serine/threonine-protein phosphatase 2A complex (PP2A). This complex consists of a common heterodimeric core enzyme, composed of a 36 kDa catalytic subunit (subunit C) and a 65 kDa constant scaffold subunit (PR65 or subunit A), that associates with a variety of regulatory subunits. Proteins that associate with the core dimer include three families of regulatory subunits B (the R2/B/PR55/B55, R3/B''/PR72/PR130/PR59 and R5/B'/B56 families), the 48 kDa variable regulatory subunit, viral proteins, and cell signaling molecules. Interacts with SGO1. Interacts with AKT1. Interacts with CUL3 and KLHL15; this interaction leads to proteasomal degradation. Ubiquitinated by E3 CUL3-KLHL15 complex; this modification leads to proteasomal degradation. As to expression, highest expression in brain.

The protein resides in the cytoplasm. Its function is as follows. As the regulatory component of the serine/threonine-protein phosphatase 2A (PP2A) holoenzyme, modulates substrate specificity, subcellular localization, and responsiveness to phosphorylation. The phosphorylated form mediates the interaction between PP2A and AKT1, leading to AKT1 dephosphorylation. In Homo sapiens (Human), this protein is Serine/threonine-protein phosphatase 2A 56 kDa regulatory subunit beta isoform (PPP2R5B).